Consider the following 76-residue polypeptide: Zinc finger protein 706 (76 aa).

Low complexity predominate over residues 1 to 13 (MARGQQKIQSQQK). 2 disordered regions span residues 1 to 32 (MARG…QKAA) and 53 to 76 (TFKQ…DVQA). Composition is skewed to basic and acidic residues over residues 17-31 (KQAE…DQKA) and 53-62 (TFKQHFESKH). Residues 39–62 (YTCTVCRTQMPDPKTFKQHFESKH) form a C2H2-type zinc finger.

Its subcellular location is the cytoplasm. The protein resides in the nucleus. Functionally, transcription repressor involved in the exit of embryonic stem cells (ESCs) from self-renewal. The chain is Zinc finger protein 706 from Gallus gallus (Chicken).